The primary structure comprises 220 residues: Inner membrane-spanning protein YciB (220 aa).

6 helical membrane passes run 20-40 (EVPPLLKLALELGPLLVFFFA), 57-77 (IGAPIFLATALFMAATVIALA), 86-106 (LPIMPLVSGIVVLVFGALTLW), 123-143 (LFGGILLGGLFFGKSLLGYVF), 156-176 (KLTLRWGLFFIFLAIVNEIVW), and 187-207 (FKVWGIMPITIVFTLLQMPLI).

The protein belongs to the YciB family.

Its subcellular location is the cell inner membrane. In terms of biological role, plays a role in cell envelope biogenesis, maintenance of cell envelope integrity and membrane homeostasis. The polypeptide is Inner membrane-spanning protein YciB (Brucella abortus (strain S19)).